The chain runs to 294 residues: Glycine--tRNA ligase alpha subunit (294 aa).

Belongs to the class-II aminoacyl-tRNA synthetase family. In terms of assembly, tetramer of two alpha and two beta subunits.

The protein resides in the cytoplasm. The enzyme catalyses tRNA(Gly) + glycine + ATP = glycyl-tRNA(Gly) + AMP + diphosphate. This chain is Glycine--tRNA ligase alpha subunit, found in Lawsonia intracellularis (strain PHE/MN1-00).